A 477-amino-acid chain; its full sequence is Ribulose bisphosphate carboxylase large chain (477 aa).

Residues 1–2 constitute a propeptide that is removed on maturation; it reads MS. Residue proline 3 is modified to N-acetylproline. N6,N6,N6-trimethyllysine is present on lysine 14. 2 residues coordinate substrate: asparagine 123 and threonine 173. The active-site Proton acceptor is lysine 175. Residue lysine 177 participates in substrate binding. Residues lysine 201, aspartate 203, and glutamate 204 each contribute to the Mg(2+) site. An N6-carboxylysine modification is found at lysine 201. Histidine 294 (proton acceptor) is an active-site residue. Substrate is bound by residues arginine 295, histidine 327, and serine 379.

The protein belongs to the RuBisCO large chain family. Type I subfamily. In terms of assembly, heterohexadecamer of 8 large chains and 8 small chains; disulfide-linked. The disulfide link is formed within the large subunit homodimers. Mg(2+) is required as a cofactor. The disulfide bond which can form in the large chain dimeric partners within the hexadecamer appears to be associated with oxidative stress and protein turnover.

The protein resides in the plastid. It localises to the chloroplast. The catalysed reaction is 2 (2R)-3-phosphoglycerate + 2 H(+) = D-ribulose 1,5-bisphosphate + CO2 + H2O. It catalyses the reaction D-ribulose 1,5-bisphosphate + O2 = 2-phosphoglycolate + (2R)-3-phosphoglycerate + 2 H(+). Functionally, ruBisCO catalyzes two reactions: the carboxylation of D-ribulose 1,5-bisphosphate, the primary event in carbon dioxide fixation, as well as the oxidative fragmentation of the pentose substrate in the photorespiration process. Both reactions occur simultaneously and in competition at the same active site. This chain is Ribulose bisphosphate carboxylase large chain, found in Persea americana (Avocado).